The following is a 51-amino-acid chain: Protein 1.4 (51 aa).

Positions 1 to 23 (MFKKVGKFLAALAAILTLAYILA) are cleaved as a signal peptide. A helical membrane pass occupies residues 28-48 (VALVVVGACYLAAVCACVWSI).

It localises to the host membrane. The chain is Protein 1.4 from Escherichia coli (Bacteriophage T7).